A 336-amino-acid chain; its full sequence is Coproporphyrin III ferrochelatase (336 aa).

Fe-coproporphyrin III is bound by residues S52 and Y116. Fe(2+) is bound by residues H176 and E259.

Belongs to the ferrochelatase family.

The protein resides in the cytoplasm. It catalyses the reaction Fe-coproporphyrin III + 2 H(+) = coproporphyrin III + Fe(2+). It functions in the pathway porphyrin-containing compound metabolism; protoheme biosynthesis. Functionally, involved in coproporphyrin-dependent heme b biosynthesis. Catalyzes the insertion of ferrous iron into coproporphyrin III to form Fe-coproporphyrin III. The protein is Coproporphyrin III ferrochelatase of Mycobacterium leprae (strain Br4923).